The sequence spans 149 residues: Extracellular protease inhibitor 1 (149 aa).

An N-terminal signal peptide occupies residues 1-16 (MKSALLFTLVVAAVHA). Kazal-like domains lie at 29-86 (ESNE…SSTG) and 88-141 (QPPS…ACVG). Intrachain disulfides connect cysteine 35/cysteine 65 and cysteine 39/cysteine 58. Asparagine 67 carries an N-linked (GlcNAc...) asparagine glycan. Intrachain disulfides connect cysteine 94–cysteine 124, cysteine 98–cysteine 117, and cysteine 106–cysteine 139.

As to quaternary structure, interacts with host subtilisin-like protease P69B.

Its subcellular location is the secreted. Functionally, secreted effector that interacts with and inhibits the pathogenesis-related P69B subtilisin-like serine protease of host tomato. Inhibition of host proteases by a pathogen extracellular protease inhibitor forms a specific type of defense-counterdefense mechanism between plants and microbial pathogens. The polypeptide is Extracellular protease inhibitor 1 (Phytophthora infestans (Potato late blight agent)).